The chain runs to 61 residues: Small ribosomal subunit protein uS14 (61 aa).

Zn(2+) is bound by residues Cys-24, Cys-27, Cys-40, and Cys-43.

Belongs to the universal ribosomal protein uS14 family. Zinc-binding uS14 subfamily. As to quaternary structure, part of the 30S ribosomal subunit. Contacts proteins S3 and S10. The cofactor is Zn(2+).

In terms of biological role, binds 16S rRNA, required for the assembly of 30S particles and may also be responsible for determining the conformation of the 16S rRNA at the A site. The protein is Small ribosomal subunit protein uS14 of Syntrophobacter fumaroxidans (strain DSM 10017 / MPOB).